Reading from the N-terminus, the 356-residue chain is Fructose-1,6-bisphosphatase class 1 (356 aa).

Glu91, Asp113, Leu115, and Asp116 together coordinate Mg(2+). Residues 116–119 (DGSS) and Asn208 contribute to the substrate site. Residue Glu280 coordinates Mg(2+).

It belongs to the FBPase class 1 family. Homotetramer. Mg(2+) is required as a cofactor.

The protein resides in the cytoplasm. The enzyme catalyses beta-D-fructose 1,6-bisphosphate + H2O = beta-D-fructose 6-phosphate + phosphate. Its pathway is carbohydrate biosynthesis; gluconeogenesis. This is Fructose-1,6-bisphosphatase class 1 from Methylacidiphilum infernorum (isolate V4) (Methylokorus infernorum (strain V4)).